Here is a 102-residue protein sequence, read N- to C-terminus: Large ribosomal subunit protein bL21 (102 aa).

It belongs to the bacterial ribosomal protein bL21 family. In terms of assembly, part of the 50S ribosomal subunit. Contacts protein L20.

Functionally, this protein binds to 23S rRNA in the presence of protein L20. The chain is Large ribosomal subunit protein bL21 from Zymomonas mobilis subsp. mobilis (strain ATCC 31821 / ZM4 / CP4).